The primary structure comprises 158 residues: Transcription elongation factor GreA (158 aa).

This sequence belongs to the GreA/GreB family.

Functionally, necessary for efficient RNA polymerase transcription elongation past template-encoded arresting sites. The arresting sites in DNA have the property of trapping a certain fraction of elongating RNA polymerases that pass through, resulting in locked ternary complexes. Cleavage of the nascent transcript by cleavage factors such as GreA or GreB allows the resumption of elongation from the new 3'terminus. GreA releases sequences of 2 to 3 nucleotides. The polypeptide is Transcription elongation factor GreA (Rhizobium etli (strain CIAT 652)).